The chain runs to 203 residues: FMN-dependent NADH:quinone oxidoreductase 5 (203 aa).

Residues Ser-9, 15 to 17, 95 to 98, and 139 to 142 each bind FMN; these read SAS, MYNF, and TSGG.

This sequence belongs to the azoreductase type 1 family. As to quaternary structure, homodimer. FMN serves as cofactor.

The catalysed reaction is 2 a quinone + NADH + H(+) = 2 a 1,4-benzosemiquinone + NAD(+). It carries out the reaction N,N-dimethyl-1,4-phenylenediamine + anthranilate + 2 NAD(+) = 2-(4-dimethylaminophenyl)diazenylbenzoate + 2 NADH + 2 H(+). Its function is as follows. Quinone reductase that provides resistance to thiol-specific stress caused by electrophilic quinones. Functionally, also exhibits azoreductase activity. Catalyzes the reductive cleavage of the azo bond in aromatic azo compounds to the corresponding amines. This is FMN-dependent NADH:quinone oxidoreductase 5 from Pseudomonas fluorescens (strain ATCC BAA-477 / NRRL B-23932 / Pf-5).